Here is a 225-residue protein sequence, read N- to C-terminus: UPF0173 metal-dependent hydrolase Fjoh_2786 (225 aa).

This sequence belongs to the UPF0173 family.

The sequence is that of UPF0173 metal-dependent hydrolase Fjoh_2786 from Flavobacterium johnsoniae (strain ATCC 17061 / DSM 2064 / JCM 8514 / BCRC 14874 / CCUG 350202 / NBRC 14942 / NCIMB 11054 / UW101) (Cytophaga johnsonae).